A 337-amino-acid chain; its full sequence is Protein-methionine-sulfoxide reductase catalytic subunit MsrP (337 aa).

Residues 1–50 constitute a signal peptide (tat-type signal); that stretch reads MLIKLPSASGSKESDVTPESIYLSRRTLLASSLAGLAVTALPRWASAADA. Residues Asn-94, 97–98, Cys-152, Thr-187, Asn-237, Arg-242, and 253–255 contribute to the Mo-molybdopterin site; these read YE and SVK.

The protein belongs to the MsrP family. As to quaternary structure, heterodimer of a catalytic subunit (MsrP) and a heme-binding subunit (MsrQ). The cofactor is Mo-molybdopterin. Predicted to be exported by the Tat system. The position of the signal peptide cleavage has not been experimentally proven.

The protein localises to the periplasm. It catalyses the reaction L-methionyl-[protein] + a quinone + H2O = L-methionyl-(S)-S-oxide-[protein] + a quinol. The enzyme catalyses L-methionyl-[protein] + a quinone + H2O = L-methionyl-(R)-S-oxide-[protein] + a quinol. Its function is as follows. Part of the MsrPQ system that repairs oxidized periplasmic proteins containing methionine sulfoxide residues (Met-O), using respiratory chain electrons. Thus protects these proteins from oxidative-stress damage caused by reactive species of oxygen and chlorine generated by the host defense mechanisms. MsrPQ is essential for the maintenance of envelope integrity under bleach stress, rescuing a wide series of structurally unrelated periplasmic proteins from methionine oxidation. The catalytic subunit MsrP is non-stereospecific, being able to reduce both (R-) and (S-) diastereoisomers of methionine sulfoxide. The sequence is that of Protein-methionine-sulfoxide reductase catalytic subunit MsrP from Pseudomonas syringae pv. tomato (strain ATCC BAA-871 / DC3000).